Reading from the N-terminus, the 129-residue chain is Large ribosomal subunit protein bL20 (129 aa).

The protein belongs to the bacterial ribosomal protein bL20 family.

Its function is as follows. Binds directly to 23S ribosomal RNA and is necessary for the in vitro assembly process of the 50S ribosomal subunit. It is not involved in the protein synthesizing functions of that subunit. In Mycolicibacterium gilvum (strain PYR-GCK) (Mycobacterium gilvum (strain PYR-GCK)), this protein is Large ribosomal subunit protein bL20.